Consider the following 335-residue polypeptide: 2-acylglycerol O-acyltransferase 1 (335 aa).

Helical transmembrane passes span 24–44 (WVFS…SLVL) and 47–67 (LWLI…TPQA). N77, N125, and N180 each carry an N-linked (GlcNAc...) asparagine glycan.

Belongs to the diacylglycerol acyltransferase family.

Its subcellular location is the endoplasmic reticulum membrane. The catalysed reaction is a 2-acylglycerol + an acyl-CoA = a 1,2-diacylglycerol + CoA. The enzyme catalyses a 2-acylglycerol + an acyl-CoA = a 1,2-diacyl-sn-glycerol + CoA. It carries out the reaction a 2-acylglycerol + an acyl-CoA = a 2,3-diacyl-sn-glycerol + CoA. It catalyses the reaction a 1-acylglycerol + an acyl-CoA = a 1,2-diacylglycerol + CoA. The catalysed reaction is a 1-acylglycerol + an acyl-CoA = a 1,3-diacylglycerol + CoA. The enzyme catalyses a 1-acyl-sn-glycerol + an acyl-CoA = a 1,3-diacyl-sn-glycerol + CoA. It carries out the reaction a 3-acyl-sn-glycerol + an acyl-CoA = a 1,3-diacyl-sn-glycerol + CoA. The protein operates within glycerolipid metabolism; triacylglycerol biosynthesis. In terms of biological role, involved in glycerolipid synthesis and lipid metabolism. Catalyzes the formation of diacylglycerol, the precursor of triacylglycerol, by transferring the acyl chain of a fatty acyl-CoA to a monoacylglycerol, mainly at the sn-1 or sn-3 positions. It uses both sn-2-monoacylglycerol (2-acylglycerol) and sn-1-monoacylglycerol (1-acyl-sn-glycerol) equally well as substrates, and uses sn-3-monoacylglycerol (3-acyl-sn-glycerol) with lower efficiency. The protein is 2-acylglycerol O-acyltransferase 1 (mogat1) of Xenopus tropicalis (Western clawed frog).